We begin with the raw amino-acid sequence, 38 residues long: Large ribosomal subunit protein bL36 (38 aa).

Belongs to the bacterial ribosomal protein bL36 family.

The chain is Large ribosomal subunit protein bL36 from Thermotoga maritima (strain ATCC 43589 / DSM 3109 / JCM 10099 / NBRC 100826 / MSB8).